The sequence spans 171 residues: Co-chaperone protein HscB (171 aa).

One can recognise a J domain in the interval 2–74 (DYFTLFGLPA…LMRAEYLLSL (73 aa)).

Belongs to the HscB family. In terms of assembly, interacts with HscA and stimulates its ATPase activity. Interacts with IscU.

Functionally, co-chaperone involved in the maturation of iron-sulfur cluster-containing proteins. Seems to help targeting proteins to be folded toward HscA. This Escherichia coli (strain SMS-3-5 / SECEC) protein is Co-chaperone protein HscB.